Consider the following 300-residue polypeptide: Urease accessory protein UreD (300 aa).

The protein belongs to the UreD family. UreD, UreF and UreG form a complex that acts as a GTP-hydrolysis-dependent molecular chaperone, activating the urease apoprotein by helping to assemble the nickel containing metallocenter of UreC. The UreE protein probably delivers the nickel.

Its subcellular location is the cytoplasm. In terms of biological role, required for maturation of urease via the functional incorporation of the urease nickel metallocenter. The protein is Urease accessory protein UreD of Prochlorococcus marinus (strain MIT 9215).